We begin with the raw amino-acid sequence, 412 residues long: Putative competence-damage inducible protein (412 aa).

It belongs to the CinA family.

The sequence is that of Putative competence-damage inducible protein from Bacillus thuringiensis (strain Al Hakam).